A 5099-amino-acid chain; its full sequence is Malformin synthetase mlfA (5099 aa).

An adenylation 1 region spans residues 224-615 (QRHAADRPHS…CGRADTQVKL (392 aa)). The region spanning 756–829 (THLENEIQLA…EAASLAKVRD (74 aa)) is the Carrier 1 domain. S790 carries the O-(pantetheine 4'-phosphoryl)serine modification. Positions 867-1297 (EDVFPCTSMQ…PVDSLTLLKP (431 aa)) are condensation 1. The adenylation 2 stretch occupies residues 1325–1717 (DRWVNRQPDT…GRKDTQVKLR (393 aa)). Residues 1857–1934 (ARAPELERTL…QIATQCEGIA (78 aa)) form the Carrier 2 domain. O-(pantetheine 4'-phosphoryl)serine is present on S1894. Residues 1995–2040 (MQQESSSSPAPSVSSSSSSSSAPKPLLAQPEPPTNLRDSVPEPFSL) are disordered. Low complexity predominate over residues 1999–2017 (SSSSPAPSVSSSSSSSSAP). The interval 2067 to 2482 (EDIYPATPLQ…ALSPGDKKVL (416 aa)) is condensation 2. An adenylation 3 region spans residues 2505-2897 (LSTPHAPAVC…VGRKDGQLKL (393 aa)). Residues 3032–3108 (RPATAQERGL…RLVLHLQNTS (77 aa)) form the Carrier 3 domain. S3069 is modified (O-(pantetheine 4'-phosphoryl)serine). Condensation regions lie at residues 3125–3589 (WVHL…TYDQ) and 3610–4033 (DIYP…QQAM). Positions 4058-4446 (YANREAVCAW…VGRKDSQIKF (389 aa)) are adenylation 4. Positions 4581 to 4657 (PPSTGMQQGI…DLAEHISSRV (77 aa)) constitute a Carrier 4 domain. S4618 bears the O-(pantetheine 4'-phosphoryl)serine mark. Residues 4696–5017 (DILPTTGFQR…LQTVVQHQNV (322 aa)) are condensation 5.

Belongs to the NRP synthetase family.

The protein operates within secondary metabolite biosynthesis. In terms of biological role, nonribosomal peptide synthetase; part of the gene cluster that mediates the biosynthesis of malformins, cyclic pentapeptides with a disulfide bond between 2 consecutive cysteins, that show potential anti-tumor as well as antimalarial and antitrypanosomal properties. The nonribosomal peptide synthetase mlfA is responsible of the formation of the cyclic pentapeptide. The malformin biosynthesis clusters in malformin-producing fungi also contain enzymes involved in the formation of the disulfide bond between the two consecutive cysteins within malformins, in addition to additional tailoring enzymes such as methyltransferases or oxidoreductases. They are also composed of up to 4 major facilitator superfamily transporters, and transcription factors probably involved in the regulation of the expression of those clusters. The protein is Malformin synthetase mlfA of Aspergillus sclerotiicarbonarius (strain CBS 121057 / IBT 28362).